Here is a 111-residue protein sequence, read N- to C-terminus: BET1-like protein (111 aa).

Topologically, residues 1–86 (MADWTRAQSS…MARSGRDNRK (86 aa)) are cytoplasmic. Ser-9 and Ser-37 each carry phosphoserine. The t-SNARE coiled-coil homology domain maps to 15 to 77 (DILDRENKRM…TGSVKRFSTM (63 aa)). A helical; Anchor for type IV membrane protein membrane pass occupies residues 87 to 107 (LLCGMAVVLIVAFFILSYLLS). The Lumenal segment spans residues 108–111 (RTRT).

Component of a SNARE complex consisting of STX5, YKT6, GOSR1 and BET1L. Interacts with STX5.

The protein resides in the golgi apparatus membrane. It localises to the golgi apparatus. The protein localises to the trans-Golgi network membrane. In terms of biological role, vesicle SNARE required for targeting and fusion of retrograde transport vesicles with the Golgi complex. Required for the integrity of the Golgi complex. This is BET1-like protein from Mus musculus (Mouse).